The sequence spans 159 residues: Small ribosomal subunit protein uS19 (159 aa).

Belongs to the universal ribosomal protein uS19 family.

Protein S19 forms a complex with S13 that binds strongly to the 16S ribosomal RNA. This chain is Small ribosomal subunit protein uS19, found in Pyrobaculum arsenaticum (strain DSM 13514 / JCM 11321 / PZ6).